Consider the following 208-residue polypeptide: FMN-dependent NADH:quinone oxidoreductase 4 (208 aa).

This sequence belongs to the azoreductase type 1 family. Homodimer. FMN is required as a cofactor.

It catalyses the reaction 2 a quinone + NADH + H(+) = 2 a 1,4-benzosemiquinone + NAD(+). It carries out the reaction N,N-dimethyl-1,4-phenylenediamine + anthranilate + 2 NAD(+) = 2-(4-dimethylaminophenyl)diazenylbenzoate + 2 NADH + 2 H(+). Functionally, quinone reductase that provides resistance to thiol-specific stress caused by electrophilic quinones. Also exhibits azoreductase activity. Catalyzes the reductive cleavage of the azo bond in aromatic azo compounds to the corresponding amines. This Bacillus cereus (strain ATCC 10987 / NRS 248) protein is FMN-dependent NADH:quinone oxidoreductase 4.